The chain runs to 414 residues: TAR DNA-binding protein 43 (414 aa).

Glycyl lysine isopeptide (Lys-Gly) (interchain with G-Cter in SUMO2) cross-links involve residues K79, K84, K95, K102, and K181. RRM domains follow at residues 104-200 (SDLI…RCTE) and 191-262 (RKVF…NAEP). Phosphoserine is present on S183. The segment at 216–414 (EVVDVFIPKP…MDSKSSGWGM (199 aa)) is interaction with UBQLN2. The segment covering 261-274 (EPKHNSNRQLERSG) has biased composition (basic and acidic residues). Disordered regions lie at residues 261-301 (EPKH…GLGN) and 341-414 (ASQQ…GWGM). K263 is covalently cross-linked (Glycyl lysine isopeptide (Lys-Gly) (interchain with G-Cter in SUMO2)). Gly residues predominate over residues 275 to 301 (RFGGNPGGFGNQGGFGNSRGGGAGLGN). Position 292 is a phosphoserine (S292). An Omega-N-methylarginine modification is found at R293. Low complexity-rich tracts occupy residues 342–358 (SQQN…SQGS) and 368–392 (GSGN…SNAG). A compositionally biased stretch (gly residues) spans 393 to 402 (SGSGFNGGFG). The span at 405–414 (MDSKSSGWGM) shows a compositional bias: polar residues.

Homodimer. Homooligomer (via its N-terminal domain). Interacts with BRDT. Binds specifically to pyrimidine-rich motifs of TAR DNA and to single stranded TG repeated sequences. Binds to RNA, specifically to UG repeated sequences with a minimum of six contiguous repeats. Interacts with ATXN2; the interaction is RNA-dependent. Interacts with MATR3. Interacts with UBQLN2. Interacts with HNRNPA2B1. Interacts with ZNF106. Interacts with CNOT7/CAF1. Interacts with CRY2. Interacts with PPIA/CYPA; the interaction is dependent on RNA-binding activity of TARDBP and PPIase activity of PPIA/CYPA. Acetylation of PPIA/CYPA at 'Lys-125' favors the interaction of TARDBP with PPIA/CYPA. In terms of processing, hyperphosphorylated. Ubiquitinated.

It localises to the nucleus. The protein localises to the cytoplasm. It is found in the stress granule. The protein resides in the mitochondrion. In terms of biological role, RNA-binding protein that is involved in various steps of RNA biogenesis and processing. Preferentially binds, via its two RNA recognition motifs RRM1 and RRM2, to GU-repeats on RNA molecules predominantly localized within long introns and in the 3'UTR of mRNAs. In turn, regulates the splicing of many non-coding and protein-coding RNAs including proteins involved in neuronal survival, as well as mRNAs that encode proteins relevant for neurodegenerative diseases. Plays a role in maintaining mitochondrial homeostasis by regulating the processing of mitochondrial transcripts. Also regulates mRNA stability by recruiting CNOT7/CAF1 deadenylase on mRNA 3'UTR leading to poly(A) tail deadenylation and thus shortening. In response to oxidative insult, associates with stalled ribosomes localized to stress granules (SGs) and contributes to cell survival. Also participates in the normal skeletal muscle formation and regeneration, forming cytoplasmic myo-granules and binding mRNAs that encode sarcomeric proteins. Plays a role in the maintenance of the circadian clock periodicity via stabilization of the CRY1 and CRY2 proteins in a FBXL3-dependent manner. Negatively regulates the expression of CDK6. Regulates the expression of HDAC6, ATG7 and VCP in a PPIA/CYPA-dependent manner. The polypeptide is TAR DNA-binding protein 43 (Tardbp) (Mus musculus (Mouse)).